Reading from the N-terminus, the 272-residue chain is Potassium channel regulatory protein (272 aa).

The 102-residue stretch at 5–106 folds into the BTB domain; the sequence is ELVTLNVGGK…LLNPYLLQPR (102 aa).

As to quaternary structure, can form homooligomers. Interacts with KCNA1 (via cytoplasmic N-terminal domain) and KCNA4. In terms of tissue distribution, ubiquitous in normal tissues and expressed in some tumor tissues.

Its subcellular location is the endoplasmic reticulum. Functionally, inhibits potassium fluxes in cells. May regulate Kv1 family channel proteins by retaining a fraction of channels in endomembranes. The sequence is that of Potassium channel regulatory protein (KCNRG) from Homo sapiens (Human).